Reading from the N-terminus, the 162-residue chain is MAAGQGGWLRPALGLRLLLATAFQAVSALGAEFASEACRELGFSSNLLCSSCDLLGQFNLLPLDPVCRGCCQEEAQFETKKLYAGAILEVCGUKLGRFPQVQAFVRSDKPKLFRGLQIKYVRGSDPVLKLLDDNGNIAEELSILKWNTDSVEEFLSEKLERI.

The signal sequence occupies residues 1 to 28 (MAAGQGGWLRPALGLRLLLATAFQAVSA). Selenocysteine 93 is a non-standard amino acid (selenocysteine).

Belongs to the selenoprotein M/F family. As to quaternary structure, forms a tight complex with UGGT1/UGCGL1. Interacts with UGGT2/UGCGL2. Interacts with RDH11.

It is found in the endoplasmic reticulum lumen. May be involved in redox reactions associated with the formation of disulfide bonds. May contribute to the quality control of protein folding in the endoplasmic reticulum. May regulate protein folding by enhancing the catalytic activity of UGGT1/UGCGL1 and UGGT2/UGCGL2. This Mus musculus (Mouse) protein is Selenoprotein F.